A 105-amino-acid polypeptide reads, in one-letter code: Pyruvate synthase subunit PorD (105 aa).

2 4Fe-4S ferredoxin-type domains span residues F44–E73 and G74–E103. 8 residues coordinate [4Fe-4S] cluster: C53, C56, C59, C63, C83, C86, C89, and C93.

As to quaternary structure, heterotetramer of one alpha, one beta, one delta and one gamma chain. [4Fe-4S] cluster is required as a cofactor.

The sequence is that of Pyruvate synthase subunit PorD (porD) from Pyrococcus abyssi (strain GE5 / Orsay).